The chain runs to 380 residues: Apelin receptor (380 aa).

The Extracellular segment spans residues 1–30 (MEEGGDFDNYYGADNQSECEYTDWKSSGAL). Asn-15 is a glycosylation site (N-linked (GlcNAc...) asparagine). Intrachain disulfides connect Cys-19–Cys-281 and Cys-102–Cys-181. The helical transmembrane segment at 31 to 54 (IPAIYMLVFLLGTTGNGLVLWTVF) threads the bilayer. Residues 55 to 64 (RSSREKRRSA) lie on the Cytoplasmic side of the membrane. The helical transmembrane segment at 65-86 (DIFIASLAVADLTFVVTLPLWA) threads the bilayer. Over 87–99 (TYTYRDYDWPFGT) the chain is Extracellular. A helical transmembrane segment spans residues 100 to 125 (FFCKLSSYLIFVNMYASVFCLTGLSF). The Cytoplasmic segment spans residues 126–146 (DRYLAIVRPVANARLRLRVSG). Residues 147-164 (AVATAVLWVLAALLAMPV) traverse the membrane as a helical segment. The Extracellular segment spans residues 165–198 (MVLRTTGDLENTTKVQCYMDYSMVATVSSEWAWE). An N-linked (GlcNAc...) asparagine glycan is attached at Asn-175. A helical membrane pass occupies residues 199–223 (VGLGVSSTTVGFVVPFTIMLTCYFF). Topologically, residues 224 to 246 (IAQTIAGHFRKERIEGLRKRRRL) are cytoplasmic. The chain crosses the membrane as a helical span at residues 247-270 (LSIIVVLVVTFALCWMPYHLVKTL). Residues 271–289 (YMLGSLLHWPCDFDLFLMN) lie on the Extracellular side of the membrane. The chain crosses the membrane as a helical span at residues 290–312 (IFPYCTCISYVNSCLNPFLYAFF). Over 313-380 (DPRFRQACTS…PYSQETLVVD (68 aa)) the chain is Cytoplasmic. Over residues 342–351 (KSASYSSGHS) the composition is skewed to low complexity. The disordered stretch occupies residues 342 to 380 (KSASYSSGHSQGPGPNMGKGGEQMHEKSIPYSQETLVVD). The segment covering 371 to 380 (PYSQETLVVD) has biased composition (polar residues).

The protein belongs to the G-protein coupled receptor 1 family. As to quaternary structure, homodimer; dimerization inhibits APLNR-mediated G protein and beta-arrestin signaling pathways compared to monomeric APLNR. In terms of tissue distribution, expressed in heart, brain, kidney, stomach, spleen, thymus, lung, ovary, small intestine and colon, adipose tissues and pancreas. Expressed in glial cells, astrocytes and neuronal subpopulations. Expressed in embryonic (ESCs) and induced (iPSCs) pluripotent stem cells.

Its subcellular location is the cell membrane. G protein-coupled receptor for peptide hormones apelin (APLN) and apelin receptor early endogenous ligand (APELA/ELA), that plays a role in the regulation of normal cardiovascular function and fluid homeostasis. When acting as apelin receptor, activates both G(i) protein pathway that inhibits adenylate cyclase activity, and the beta-arrestin pathway that promotes internalization of the receptor. APLNR/APJ also functions as mechanoreceptor that is activated by pathological stimuli in a G-protein-independent fashion to induce beta-arrestin signaling, hence eliciting cardiac hypertrophy. However, the presence of apelin ligand blunts cardiac hypertrophic induction from APLNR/APJ on response to pathological stimuli. Plays a key role in early development such as gastrulation, blood vessels formation and heart morphogenesis by acting as a APELA receptor. May promote angioblast migration toward the embryonic midline, i.e. the position of the future vessel formation, during vasculogenesis. Promotes sinus venosus (SV)-derived endothelial cells migration into the developing heart to promote coronary blood vessel development. Also plays a role in various processes in adults such as regulation of blood vessel formation, blood pressure, heart contractility and heart failure. In terms of biological role, (Microbial infection) Alternative coreceptor with CD4 for HIV-1 infection; may be involved in the development of AIDS dementia. This Homo sapiens (Human) protein is Apelin receptor.